The sequence spans 369 residues: Peptide chain release factor 2 (369 aa).

Glutamine 249 bears the N5-methylglutamine mark.

This sequence belongs to the prokaryotic/mitochondrial release factor family. In terms of processing, methylated by PrmC. Methylation increases the termination efficiency of RF2.

It localises to the cytoplasm. Functionally, peptide chain release factor 2 directs the termination of translation in response to the peptide chain termination codons UGA and UAA. The sequence is that of Peptide chain release factor 2 from Thermosipho melanesiensis (strain DSM 12029 / CIP 104789 / BI429).